A 162-amino-acid chain; its full sequence is Interleukin-15 (162 aa).

The N-terminal stretch at Met-1 to Ala-29 is a signal peptide. The propeptide occupies Gly-30 to Ala-48. Intrachain disulfides connect Cys-83/Cys-133 and Cys-90/Cys-136. Residues Asn-119 and Asn-127 are each glycosylated (N-linked (GlcNAc...) asparagine).

The protein belongs to the IL-15/IL-21 family.

The protein localises to the secreted. Cytokine that plays a major role in the development of inflammatory and protective immune responses to microbial invaders and parasites by modulating immune cells of both the innate and adaptive immune systems. Stimulates the proliferation of natural killer cells, T-cells and B-cells and promotes the secretion of several cytokines. In monocytes, induces the production of IL8 and monocyte chemotactic protein 1/CCL2, two chemokines that attract neutrophils and monocytes respectively to sites of infection. Unlike most cytokines, which are secreted in soluble form, IL15 is expressed in association with its high affinity IL15RA on the surface of IL15-producing cells and delivers signals to target cells that express IL2RB and IL2RG receptor subunits. Binding to its receptor triggers the phosphorylation of JAK1 and JAK3 and the recruitment and subsequent phosphorylation of signal transducer and activator of transcription-3/STAT3 and STAT5. In mast cells, induces the rapid tyrosine phosphorylation of STAT6 and thereby controls mast cell survival and release of cytokines such as IL4. The chain is Interleukin-15 (IL15) from Cavia porcellus (Guinea pig).